We begin with the raw amino-acid sequence, 309 residues long: Elongation factor Ts (309 aa).

Positions 82–85 (TDFV) are involved in Mg(2+) ion dislocation from EF-Tu.

Belongs to the EF-Ts family.

It localises to the cytoplasm. Functionally, associates with the EF-Tu.GDP complex and induces the exchange of GDP to GTP. It remains bound to the aminoacyl-tRNA.EF-Tu.GTP complex up to the GTP hydrolysis stage on the ribosome. The protein is Elongation factor Ts of Rickettsia peacockii (strain Rustic).